Here is a 225-residue protein sequence, read N- to C-terminus: Histone H1.11L (225 aa).

Composition is skewed to low complexity over residues 1–23 (MSET…PAKA) and 31–43 (AAGG…PAGP). 2 disordered regions span residues 1–46 (MSET…PSVT) and 94–225 (SKGT…AKKK). Serine 2 bears the N-acetylserine mark. An H15 domain is found at 41 to 114 (AGPSVTELIT…GASGSFRLSK (74 aa)). 4 stretches are compositionally biased toward basic residues: residues 123-138 (APKK…KPAA), 146-163 (KKPK…KAKK), 171-189 (KSAK…KKAV), and 198-225 (KAVK…AKKK).

It belongs to the histone H1/H5 family.

The protein localises to the nucleus. It localises to the chromosome. Histones H1 are necessary for the condensation of nucleosome chains into higher-order structures. The polypeptide is Histone H1.11L (Gallus gallus (Chicken)).